Consider the following 265-residue polypeptide: 4-diphosphocytidyl-2-C-methyl-D-erythritol kinase (265 aa).

The active site involves K8. Residue 95–105 participates in ATP binding; the sequence is PIGAGLGGGSS. D135 is a catalytic residue.

The protein belongs to the GHMP kinase family. IspE subfamily.

The enzyme catalyses 4-CDP-2-C-methyl-D-erythritol + ATP = 4-CDP-2-C-methyl-D-erythritol 2-phosphate + ADP + H(+). Its pathway is isoprenoid biosynthesis; isopentenyl diphosphate biosynthesis via DXP pathway; isopentenyl diphosphate from 1-deoxy-D-xylulose 5-phosphate: step 3/6. In terms of biological role, catalyzes the phosphorylation of the position 2 hydroxy group of 4-diphosphocytidyl-2C-methyl-D-erythritol. The chain is 4-diphosphocytidyl-2-C-methyl-D-erythritol kinase from Ureaplasma urealyticum serovar 10 (strain ATCC 33699 / Western).